Consider the following 506-residue polypeptide: MPTLYTDIEIPQLKISLKQPLGLFINNEFCPSSDGKTIETVNPATGEPITSFQAANEKDVDKAVKAARAAFDNVWSKTSSEQRGIYLSNLLKLIEEEQDTLAALETLDAGKPFHSNAKQDLAQIIELTRYYAGAVDKFNMGETIPLTFNKFAYTLKVPFGVVAQIVPWNYPLAMACRKMQGALAAGNTVIIKPAENTSLSLLYFATLIKKAGFPPGVVNVIPGYGSVVGKALGTHMDIDKISFTGSTKVGGSVLEASGQSNLKDITLECGGKSPALVFEDADLDKAIEWVANGIFFNSGQICTANSRVYVQSSIYDKFVEKFKETAKKEWDVAGKFDPFDEKCIVGPVISSTQYDRIKSYIERGKKEEKLDMFQTSEFPIGGAKGYFIPPTIFTDVPETSKLLRDEIFGPVVVVSKFTNYDDALKLANDTCYGLASAVFTKDVKKAHMFARDIKAGTVWINQTNQEEAKVPFGGFKMSGIGRESGDTGVDNYLQIKSVHVDLSLDK.

Catalysis depends on Glu268, which acts as the Proton acceptor. Residue Cys302 is the Nucleophile of the active site.

The protein belongs to the aldehyde dehydrogenase family.

Its subcellular location is the cytoplasm. The enzyme catalyses an aldehyde + NAD(+) + H2O = a carboxylate + NADH + 2 H(+). It catalyses the reaction 3-aminopropanal + NAD(+) + H2O = beta-alanine + NADH + 2 H(+). Cytoplasmic aldehyde dehydrogenase involved in ethanol oxidation. Involved in pantothenic acid production through the conversion of 3-aminopropanal to beta-alanine, an intermediate in pantothenic acid (vitamin B5) and coenzyme A (CoA) biosynthesis. This chain is Aldehyde dehydrogenase [NAD(P)+] 2 (ALD3), found in Saccharomyces cerevisiae (strain ATCC 204508 / S288c) (Baker's yeast).